The following is a 656-amino-acid chain: Pyoverdine export ATP-binding/permease protein PvdT (656 aa).

Positions 6 to 245 (IDLRGIRKSY…SANPAALQAV (240 aa)) constitute an ABC transporter domain. 43 to 50 (GASGSGKS) provides a ligand contact to ATP. The next 4 helical transmembrane spans lie at 284 to 304 (ALTL…LAVG), 538 to 558 (IAAI…LMTV), 589 to 609 (LSVV…AALL), and 619 to 639 (LSAV…FGFM).

Belongs to the ABC transporter superfamily. Macrolide exporter (TC 3.A.1.122) family. In terms of assembly, part of the tripartite efflux system PvdRT-OpmQ, which is composed of an inner membrane component with both ATPase and permease domains, PvdT, a periplasmic membrane fusion protein, PvdR, and an outer membrane component, OpmQ.

It localises to the cell inner membrane. Functionally, part of the tripartite efflux system PvdRT-OpmQ required for the secretion into the extracellular milieu of the siderophore pyoverdine (PVD), which is involved in iron acquisition. This subunit binds PVD and drives its secretion by hydrolyzing ATP. The system is responsible for export of newly synthesized PVD after the final steps of biosynthesis have taken place in the periplasm. It is also responsible for recycling of PVD after internalization of ferri-PVD into the periplasm by the outer-membrane receptor FpvA and release of iron from PVD, thus making PVD available for new cycles of iron uptake. This Pseudomonas syringae pv. tomato (strain ATCC BAA-871 / DC3000) protein is Pyoverdine export ATP-binding/permease protein PvdT.